Reading from the N-terminus, the 102-residue chain is uncharacterized protein (102 aa).

A disordered region spans residues 1 to 43; sequence MNNAHEENISSVTGFKSTSGSPAIGSSLPGRSGEGRSSSSSSG. The segment covering 9 to 21 has biased composition (polar residues); sequence ISSVTGFKSTSGS. A compositionally biased stretch (low complexity) spans 25–43; sequence GSSLPGRSGEGRSSSSSSG.

This is an uncharacterized protein from Saccharomyces cerevisiae (strain ATCC 204508 / S288c) (Baker's yeast).